Reading from the N-terminus, the 89-residue chain is Small ribosomal subunit protein uS17 (89 aa).

This sequence belongs to the universal ribosomal protein uS17 family. Part of the 30S ribosomal subunit.

In terms of biological role, one of the primary rRNA binding proteins, it binds specifically to the 5'-end of 16S ribosomal RNA. This Stenotrophomonas maltophilia (strain K279a) protein is Small ribosomal subunit protein uS17.